Reading from the N-terminus, the 113-residue chain is MSYRRLGLRSDHRRSVLRNSVTSLLKEEKISTTETRAKEIKRLTEKMITLGKRGDLHARRQAAAYIMSDEVVQKLFSDIAARYEERNGGYTRLVKTGYRKGDGAPMVMIELVE.

This sequence belongs to the bacterial ribosomal protein bL17 family. Part of the 50S ribosomal subunit. Contacts protein L32.

This Syntrophomonas wolfei subsp. wolfei (strain DSM 2245B / Goettingen) protein is Large ribosomal subunit protein bL17.